We begin with the raw amino-acid sequence, 194 residues long: Small ribosomal subunit protein eS7 (194 aa).

Belongs to the eukaryotic ribosomal protein eS7 family.

The chain is Small ribosomal subunit protein eS7 (RpS7) from Drosophila yakuba (Fruit fly).